The sequence spans 443 residues: Transcriptional regulatory protein ZraR (443 aa).

A Response regulatory domain is found at 7-121 (DILVVDDDIS…KLQLTLSEAL (115 aa)). At D56 the chain carries 4-aspartylphosphate. Positions 141-370 (MVGDSPAMRA…LENAVERAVV (230 aa)) constitute a Sigma-54 factor interaction domain. ATP is bound by residues G172, T173, R329, and R359. Residues 423 to 442 (KTEAARRLGITRKTLLAKLS) constitute a DNA-binding region (H-T-H motif).

Phosphorylated by ZraS.

The protein localises to the cytoplasm. Its activity is regulated as follows. Activity of the ZraS/ZraR two-component system is repressed by the zinc-bound form of ZraP, which probably interacts with the periplasmic region of ZraS. Functionally, part of the Zra signaling pathway, an envelope stress response (ESR) system composed of the periplasmic accessory protein ZraP, the histidine kinase ZraS and the transcriptional regulator ZraR. The ZraPSR system contributes to antibiotic resistance and is important for membrane integrity in the presence of membrane-targeting biocides. ZraR is a member of the two-component regulatory system ZraS/ZraR. When activated by ZraS, acts in conjunction with sigma-54 to regulate the expression of zraP in the presence of high Zn(2+) or Pb(2+) concentrations. Also positively autoregulates the expression of the zraSR operon. The sequence is that of Transcriptional regulatory protein ZraR (zraR) from Klebsiella oxytoca.